Reading from the N-terminus, the 333-residue chain is Perchlorate reductase subunit beta (333 aa).

The 29-residue stretch at 12–40 (LTYVTDLNKCIGCQTCTVACKKLWTTGPG) folds into the 4Fe-4S ferredoxin-type 1 domain. Residues C21, C24, C27, and C31 each contribute to the [4Fe-4S] cluster site. Residues 101 to 121 (KERVRPSPTPRSAPNWDEDQG) form a disordered region. 2 consecutive 4Fe-4S ferredoxin-type domains span residues 128-159 (NSFF…KREQ) and 161-190 (GIVV…FNPV). Residues C137, C140, and C145 each coordinate [4Fe-4S] cluster. 3 residues coordinate [3Fe-4S] cluster: C149, C170, and C176. The [4Fe-4S] cluster site is built by C180, C197, C200, C212, and C216.

Heterotrimer of alpha, beta and gamma subunits. [3Fe-4S] cluster is required as a cofactor. Requires [4Fe-4S] cluster as cofactor.

Its subcellular location is the periplasm. Component of the perchlorate reductase that catalyzes the reduction of perchlorate to chlorite and allows anaerobic growth on perchlorate as the sole electron acceptor. The beta subunit may be responsible for electron transfer to the catalytic alpha subunit PcrA. The polypeptide is Perchlorate reductase subunit beta (pcrB) (Dechloromonas aromatica (strain RCB)).